The chain runs to 93 residues: FMRFamide-like neuropeptides 22 (93 aa).

A signal peptide spans 1 to 19 (MNRSMIALCVVLMVSLVSA). Positions 20 to 46 (QVFDLDGQQLAGLEQNDARLMEQQVKR) are excised as a propeptide. 3 positions are modified to phenylalanine amide: Phe-55, Phe-67, and Phe-79. A propeptide spanning residues 83–93 (SGAEAVSEQDY) is cleaved from the precursor.

This sequence belongs to the FARP (FMRFamide related peptide) family.

The protein localises to the secreted. In terms of biological role, FMRFamides and FMRFamide-like peptides are neuropeptides. Functionally, SPSAKWMRF-amide: Acts as a ligand for the npr-22 receptor in vitro. The protein is FMRFamide-like neuropeptides 22 of Caenorhabditis elegans.